Here is a 328-residue protein sequence, read N- to C-terminus: 6-phosphogluconolactonase (328 aa).

This sequence belongs to the cycloisomerase 2 family.

It carries out the reaction 6-phospho-D-glucono-1,5-lactone + H2O = 6-phospho-D-gluconate + H(+). The protein operates within carbohydrate degradation; pentose phosphate pathway; D-ribulose 5-phosphate from D-glucose 6-phosphate (oxidative stage): step 2/3. Functionally, catalyzes the hydrolysis of 6-phosphogluconolactone to 6-phosphogluconate. The polypeptide is 6-phosphogluconolactonase (Photorhabdus laumondii subsp. laumondii (strain DSM 15139 / CIP 105565 / TT01) (Photorhabdus luminescens subsp. laumondii)).